Here is a 138-residue protein sequence, read N- to C-terminus: Gap junction alpha-4 protein (138 aa).

Topologically, residues 1-16 (DWGFLEKLLDQVQEHS) are cytoplasmic. A helical transmembrane segment spans residues 17–39 (TVVGKIWLTVLFIFRILILGLAG). The Extracellular portion of the chain corresponds to 40-74 (ESVWGDEQSDFECNTAQPGCTNVCYDQAFPISHIP). The helical transmembrane segment at 75–97 (YWVLQFLFVSTPTLVYLGHVIYL) threads the bilayer. Residues 98 to 138 (SRREERLRQKEGELRALPDKDPRVERALAGIERQMAKISVA) are Cytoplasmic-facing.

Belongs to the connexin family. Alpha-type (group II) subfamily. A connexon is composed of a hexamer of connexins.

It localises to the cell membrane. The protein resides in the cell junction. It is found in the gap junction. In terms of biological role, one gap junction consists of a cluster of closely packed pairs of transmembrane channels, the connexons, through which materials of low MW diffuse from one cell to a neighboring cell. This is Gap junction alpha-4 protein (GJA4) from Sus scrofa (Pig).